Consider the following 195-residue polypeptide: Keratin-associated protein 4-3 (195 aa).

28 consecutive repeat copies span residues C34–T38, C39–S43, C44–S48, C49–S53, C54–S58, C59–S63, C64–T68, C69–S73, C74–S78, C79–S83, C84–S88, C89–S93, C94–T98, C99–S103, C104–S108, C109–S113, C114–S118, C119–S123, C124–T128, C129–S133, C134–S138, C144–S148, C149–A153, C154–S158, C159–S163, C164–S168, C179–T183, and C189–S193. The segment at C34 to S193 is 29 X 5 AA repeats of C-C-[GIKRQVH]-[SPT]-[STA].

The protein belongs to the KRTAP type 4 family. As to quaternary structure, interacts with hair keratins. Expressed specifically in the middle/uper portions of the hair cortex. Not detected in the hair matrix or cuticle.

In terms of biological role, in the hair cortex, hair keratin intermediate filaments are embedded in an interfilamentous matrix, consisting of hair keratin-associated proteins (KRTAP), which are essential for the formation of a rigid and resistant hair shaft through their extensive disulfide bond cross-linking with abundant cysteine residues of hair keratins. The matrix proteins include the high-sulfur and high-glycine-tyrosine keratins. In Homo sapiens (Human), this protein is Keratin-associated protein 4-3 (KRTAP4-3).